We begin with the raw amino-acid sequence, 225 residues long: NAD(P)H-quinone oxidoreductase subunit K, chloroplastic (225 aa).

[4Fe-4S] cluster contacts are provided by cysteine 43, cysteine 44, cysteine 108, and cysteine 139.

It belongs to the complex I 20 kDa subunit family. As to quaternary structure, NDH is composed of at least 16 different subunits, 5 of which are encoded in the nucleus. The cofactor is [4Fe-4S] cluster.

The protein localises to the plastid. It is found in the chloroplast thylakoid membrane. The enzyme catalyses a plastoquinone + NADH + (n+1) H(+)(in) = a plastoquinol + NAD(+) + n H(+)(out). The catalysed reaction is a plastoquinone + NADPH + (n+1) H(+)(in) = a plastoquinol + NADP(+) + n H(+)(out). Functionally, NDH shuttles electrons from NAD(P)H:plastoquinone, via FMN and iron-sulfur (Fe-S) centers, to quinones in the photosynthetic chain and possibly in a chloroplast respiratory chain. The immediate electron acceptor for the enzyme in this species is believed to be plastoquinone. Couples the redox reaction to proton translocation, and thus conserves the redox energy in a proton gradient. This chain is NAD(P)H-quinone oxidoreductase subunit K, chloroplastic, found in Barbarea verna (Land cress).